The sequence spans 241 residues: Methylthioribulose-1-phosphate dehydratase (241 aa).

Polar residues predominate over residues methionine 1–glutamate 11. Residues methionine 1–lysine 20 are disordered. Cysteine 96 lines the substrate pocket. Zn(2+) is bound by residues histidine 114 and histidine 116. Residue glutamate 138 is the Proton donor/acceptor of the active site. Histidine 194 lines the Zn(2+) pocket.

Belongs to the aldolase class II family. MtnB subfamily. Requires Zn(2+) as cofactor.

It is found in the cytoplasm. It catalyses the reaction 5-(methylsulfanyl)-D-ribulose 1-phosphate = 5-methylsulfanyl-2,3-dioxopentyl phosphate + H2O. The protein operates within amino-acid biosynthesis; L-methionine biosynthesis via salvage pathway; L-methionine from S-methyl-5-thio-alpha-D-ribose 1-phosphate: step 2/6. In terms of biological role, catalyzes the dehydration of methylthioribulose-1-phosphate (MTRu-1-P) into 2,3-diketo-5-methylthiopentyl-1-phosphate (DK-MTP-1-P). Functions in the methionine salvage pathway. May play a role in apoptosis. The polypeptide is Methylthioribulose-1-phosphate dehydratase (Osmerus mordax (Rainbow smelt)).